We begin with the raw amino-acid sequence, 445 residues long: Chromosome partition protein MukF (445 aa).

The tract at residues 213-241 (LSETSSTLRELQDTLQAASDELQTQILDI) is leucine-zipper.

It belongs to the MukF family. In terms of assembly, interacts, and probably forms a ternary complex, with MukE and MukB via its C-terminal region. The complex formation is stimulated by calcium or magnesium. It is required for an interaction between MukE and MukB.

The protein localises to the cytoplasm. It is found in the nucleoid. Its function is as follows. Involved in chromosome condensation, segregation and cell cycle progression. May participate in facilitating chromosome segregation by condensation DNA from both sides of a centrally located replisome during cell division. Not required for mini-F plasmid partitioning. Probably acts via its interaction with MukB and MukE. Overexpression results in anucleate cells. It has a calcium binding activity. The chain is Chromosome partition protein MukF from Vibrio parahaemolyticus serotype O3:K6 (strain RIMD 2210633).